The chain runs to 257 residues: Urease accessory protein UreD (257 aa).

Belongs to the UreD family. In terms of assembly, ureD, UreF and UreG form a complex that acts as a GTP-hydrolysis-dependent molecular chaperone, activating the urease apoprotein by helping to assemble the nickel containing metallocenter of UreC. The UreE protein probably delivers the nickel.

It localises to the cytoplasm. Its function is as follows. Required for maturation of urease via the functional incorporation of the urease nickel metallocenter. In Ruegeria pomeroyi (strain ATCC 700808 / DSM 15171 / DSS-3) (Silicibacter pomeroyi), this protein is Urease accessory protein UreD.